Here is a 203-residue protein sequence, read N- to C-terminus: Proline-rich protein 1 (203 aa).

The first 20 residues, 1 to 20, serve as a signal peptide directing secretion; the sequence is MMKLGLYLTLLFLSVWTVSG.

Component of the acid-insoluble and acid-soluble organic matrix of calcified layers of the shell (at protein level).

It localises to the secreted. The sequence is that of Proline-rich protein 1 from Lottia gigantea (Giant owl limpet).